The sequence spans 426 residues: uncharacterized protein (426 aa).

The protein belongs to the serpin family.

This is an uncharacterized protein from Methanosarcina acetivorans (strain ATCC 35395 / DSM 2834 / JCM 12185 / C2A).